The sequence spans 242 residues: Uridylate kinase (242 aa).

Position 16 to 19 (16 to 19 (KVSG)) interacts with ATP. Gly58 contributes to the UMP binding site. Residues Gly59 and Arg63 each coordinate ATP. Residues Asp78 and 139–146 (TGNPFCTT) contribute to the UMP site. Positions 166, 167, 172, and 175 each coordinate ATP.

The protein belongs to the UMP kinase family. As to quaternary structure, homohexamer.

The protein resides in the cytoplasm. It catalyses the reaction UMP + ATP = UDP + ADP. It functions in the pathway pyrimidine metabolism; CTP biosynthesis via de novo pathway; UDP from UMP (UMPK route): step 1/1. Its activity is regulated as follows. Inhibited by UTP. In terms of biological role, catalyzes the reversible phosphorylation of UMP to UDP. The sequence is that of Uridylate kinase from Rickettsia conorii (strain ATCC VR-613 / Malish 7).